Here is a 519-residue protein sequence, read N- to C-terminus: Xylose import ATP-binding protein XylG (519 aa).

2 consecutive ABC transporter domains span residues 6–245 (MTMR…VGRE) and 262–507 (FEAR…IRPV). 38-45 (GENGAGKS) lines the ATP pocket.

Belongs to the ABC transporter superfamily. Xylose importer (TC 3.A.1.2.4) family. The complex is composed of two ATP-binding proteins (XylG), two transmembrane proteins (XylH) and a solute-binding protein (XylF).

It is found in the cell inner membrane. It catalyses the reaction D-xylose(out) + ATP + H2O = D-xylose(in) + ADP + phosphate + H(+). Functionally, part of the ABC transporter complex XylFGH involved in xylose import. Responsible for energy coupling to the transport system. The sequence is that of Xylose import ATP-binding protein XylG from Paraburkholderia xenovorans (strain LB400).